We begin with the raw amino-acid sequence, 239 residues long: UPF0502 protein Bcen_5249 (239 aa).

The disordered stretch occupies residues 196 to 239 (IRGAKGRTEAPRGRSGATQCAGSTDGERTRHRRRRTGRRVLIAS). Residues 224–233 (TRHRRRRTGR) are compositionally biased toward basic residues.

This sequence belongs to the UPF0502 family.

The chain is UPF0502 protein Bcen_5249 from Burkholderia orbicola (strain AU 1054).